The primary structure comprises 306 residues: Ribonuclease Z (306 aa).

Residues His-63, His-65, Asp-67, His-68, His-141, Asp-211, and His-269 each contribute to the Zn(2+) site. Residue Asp-67 is the Proton acceptor of the active site.

This sequence belongs to the RNase Z family. As to quaternary structure, homodimer. Requires Zn(2+) as cofactor.

It catalyses the reaction Endonucleolytic cleavage of RNA, removing extra 3' nucleotides from tRNA precursor, generating 3' termini of tRNAs. A 3'-hydroxy group is left at the tRNA terminus and a 5'-phosphoryl group is left at the trailer molecule.. Its function is as follows. Zinc phosphodiesterase, which displays some tRNA 3'-processing endonuclease activity. Probably involved in tRNA maturation, by removing a 3'-trailer from precursor tRNA. This chain is Ribonuclease Z, found in Staphylococcus aureus (strain MSSA476).